The following is a 318-amino-acid chain: NADH-ubiquinone oxidoreductase chain 1 (318 aa).

The next 8 membrane-spanning stretches (helical) occupy residues 2–22, 70–90, 100–120, 140–160, 172–192, 217–237, 253–273, and 294–314; these read FLVNLLLMIIPILLAVAFLTL, MFIMAPILALSLALTMWTPLP, LGVLFILAMSSLAVYSILWSG, ISYEVTLAIILLSVLLMSGSF, LWLIIPAWPLAMMWFISTLAE, GGSFALFFLAEYANIIMMNAI, EFYTTSFMIKTLLMTITFLWI, and LPLTLALCMWHVSIPILTASI.

It belongs to the complex I subunit 1 family. In terms of assembly, core subunit of respiratory chain NADH dehydrogenase (Complex I) which is composed of 45 different subunits.

The protein localises to the mitochondrion inner membrane. The catalysed reaction is a ubiquinone + NADH + 5 H(+)(in) = a ubiquinol + NAD(+) + 4 H(+)(out). Functionally, core subunit of the mitochondrial membrane respiratory chain NADH dehydrogenase (Complex I) which catalyzes electron transfer from NADH through the respiratory chain, using ubiquinone as an electron acceptor. Essential for the catalytic activity and assembly of complex I. The chain is NADH-ubiquinone oxidoreductase chain 1 (MT-ND1) from Emballonura alecto (Philippine sheath-tailed bat).